The following is a 62-amino-acid chain: Large ribosomal subunit protein uL30 (62 aa).

This sequence belongs to the universal ribosomal protein uL30 family. As to quaternary structure, part of the 50S ribosomal subunit.

In Shewanella frigidimarina (strain NCIMB 400), this protein is Large ribosomal subunit protein uL30.